A 96-amino-acid polypeptide reads, in one-letter code: ATP-dependent Clp protease adapter protein ClpS (96 aa).

It belongs to the ClpS family. As to quaternary structure, binds to the N-terminal domain of the chaperone ClpA.

Functionally, involved in the modulation of the specificity of the ClpAP-mediated ATP-dependent protein degradation. This Campylobacter jejuni subsp. doylei (strain ATCC BAA-1458 / RM4099 / 269.97) protein is ATP-dependent Clp protease adapter protein ClpS.